We begin with the raw amino-acid sequence, 141 residues long: Large ribosomal subunit protein uL11 (141 aa).

Belongs to the universal ribosomal protein uL11 family. In terms of assembly, part of the ribosomal stalk of the 50S ribosomal subunit. Interacts with L10 and the large rRNA to form the base of the stalk. L10 forms an elongated spine to which L12 dimers bind in a sequential fashion forming a multimeric L10(L12)X complex. One or more lysine residues are methylated.

In terms of biological role, forms part of the ribosomal stalk which helps the ribosome interact with GTP-bound translation factors. The chain is Large ribosomal subunit protein uL11 from Chlamydia caviae (strain ATCC VR-813 / DSM 19441 / 03DC25 / GPIC) (Chlamydophila caviae).